The primary structure comprises 253 residues: uncharacterized protein (253 aa).

It belongs to the herpesviridae BTRF1 family.

This is an uncharacterized protein from Saimiriine herpesvirus 2 (strain 11) (SaHV-2).